A 482-amino-acid chain; its full sequence is MSILVKNNIHWVGQRDWEVRDFHGTEYKTLRGSSYNSYLIREEKNVLIDTVDHKFSREFVQNLRSEIDLADIDYIIINHAEEDHAGALTELMAQIPDTPIYCTANAIDSITGHHHHPEWNFNVVKTGDTLDIGNGKQLIFVETPMLHWPDSMMTYMTGDAVLFSNDAFGQHYCDERLFNDEVDQTELFEQCQRYYANILTPFSRLVTPKITEILGFNLPVDMIATSHGVVWRDNPTQIVELYLKWAADYQEDRITIFYDTMSNNTRMMADAIAQGINEVDPNVAVKIFNVARSDKNEILTNVFRSKGVLVGTSTMNNVMMPKIAGLVEEMTGLRFRNKRASAFGSHGWSGGAVDRLSTRLQDAGFEMSLSLKAKWRPDIDALELCRQHGRDIARQWALAPLPETNVKATTQEEECACAAAAAADLGPSMQCSVCQWIYDPAKGEPLQDVAPGTPWSDVPDNFLCPECSLGKDVFDVLATEAK.

The zinc metallo-hydrolase stretch occupies residues 30–210 (LRGSSYNSYL…PFSRLVTPKI (181 aa)). Residues histidine 79, glutamate 81, aspartate 83, histidine 147, aspartate 166, and histidine 227 each contribute to the Fe cation site. The region spanning 254 to 393 (ITIFYDTMSN…LCRQHGRDIA (140 aa)) is the Flavodoxin-like domain. FMN contacts are provided by residues 260–264 (TMSNN) and 342–369 (AFGS…EMSL). The Rubredoxin-like domain maps to 426–477 (GPSMQCSVCQWIYDPAKGEPLQDVAPGTPWSDVPDNFLCPECSLGKDVFDVL). 4 residues coordinate Fe cation: cysteine 431, cysteine 434, cysteine 464, and cysteine 467.

The protein in the N-terminal section; belongs to the zinc metallo-hydrolase group 3 family. Homotetramer. The cofactor is Fe cation. It depends on FMN as a cofactor.

It is found in the cytoplasm. It functions in the pathway nitrogen metabolism; nitric oxide reduction. Its function is as follows. Anaerobic nitric oxide reductase; uses NADH to detoxify nitric oxide (NO), protecting several 4Fe-4S NO-sensitive enzymes. Has at least 2 reductase partners, only one of which (NorW, flavorubredoxin reductase) has been identified. NO probably binds to the di-iron center; electrons enter from the NorW at rubredoxin and are transferred sequentially to the FMN center and the di-iron center. Also able to function as an aerobic oxygen reductase. This Citrobacter koseri (strain ATCC BAA-895 / CDC 4225-83 / SGSC4696) protein is Anaerobic nitric oxide reductase flavorubredoxin.